The chain runs to 257 residues: Imidazole glycerol phosphate synthase subunit HisF (257 aa).

Active-site residues include aspartate 12 and aspartate 131.

Belongs to the HisA/HisF family. As to quaternary structure, heterodimer of HisH and HisF.

The protein localises to the cytoplasm. It carries out the reaction 5-[(5-phospho-1-deoxy-D-ribulos-1-ylimino)methylamino]-1-(5-phospho-beta-D-ribosyl)imidazole-4-carboxamide + L-glutamine = D-erythro-1-(imidazol-4-yl)glycerol 3-phosphate + 5-amino-1-(5-phospho-beta-D-ribosyl)imidazole-4-carboxamide + L-glutamate + H(+). It functions in the pathway amino-acid biosynthesis; L-histidine biosynthesis; L-histidine from 5-phospho-alpha-D-ribose 1-diphosphate: step 5/9. Its function is as follows. IGPS catalyzes the conversion of PRFAR and glutamine to IGP, AICAR and glutamate. The HisF subunit catalyzes the cyclization activity that produces IGP and AICAR from PRFAR using the ammonia provided by the HisH subunit. This Rhodococcus opacus (strain B4) protein is Imidazole glycerol phosphate synthase subunit HisF.